Here is a 363-residue protein sequence, read N- to C-terminus: Nucleoporin SEH1 (363 aa).

WD repeat units follow at residues Ala15–Arg54, Cys60–Asp101, Gln108–Glu149, Arg158–Glu206, Asp223–Leu264, and Gly287–Lys326.

This sequence belongs to the WD repeat SEC13 family. As to quaternary structure, component of the nuclear pore complex (NPC). Probably part of the GATOR complex.

The protein resides in the nucleus. It is found in the nuclear pore complex. Its subcellular location is the lysosome membrane. The protein localises to the nucleus envelope. In terms of biological role, probable component of the nuclear pore complex (NPC) which is involved in the trafficking of macromolecules between the cytoplasm and nucleus. Its function is as follows. As a component of the GATOR complex may function in the amino acid-sensing branch of the TORC1 signaling pathway. This is Nucleoporin SEH1 from Caenorhabditis elegans.